A 527-amino-acid polypeptide reads, in one-letter code: Splicing factor MUD2 (527 aa).

The tract at residues 36-169 (DNAVIDTHFK…SKFNGDRDKR (134 aa)) is disordered. The segment covering 42-55 (THFKRQKSDGELPK) has biased composition (basic and acidic residues). A Phosphoserine modification is found at serine 49. A compositionally biased stretch (polar residues) spans 60-85 (RNVSHSNNRGPSSIITMSTNRTTYEQ). Over residues 94 to 109 (SYRDASGRSYNRENRY) the composition is skewed to basic and acidic residues. Residues 110–122 (SSHNTGPQWNNNP) are compositionally biased toward polar residues. 2 stretches are compositionally biased toward basic and acidic residues: residues 125-141 (RQRDERRGRNERFDRRG) and 155-169 (RKNEGSKFNGDRDKR). Positions 424–511 (LLLLNCLDPL…QFNDRTVLCT (88 aa)) constitute an RRM domain.

As to quaternary structure, MSL5, MUD2 and PRP40 interact to form the commitment complex 2 (CC2), a precursor of mature spliceosomes.

Functionally, splicing factor that contacts pre-mRNA directly and is a component of the pre-mRNA-U1 snRNP complex (commitment complex 2) that forms during early spliceosome assembly in yeast extracts. The polypeptide is Splicing factor MUD2 (MUD2) (Saccharomyces cerevisiae (strain ATCC 204508 / S288c) (Baker's yeast)).